A 43-amino-acid polypeptide reads, in one-letter code: Protein PsbN (43 aa).

The helical transmembrane segment at 5–27 threads the bilayer; sequence TVFSIFISCLLLSLTGYSLYTAF.

Belongs to the PsbN family.

It is found in the plastid. It localises to the chloroplast thylakoid membrane. Functionally, may play a role in photosystem I and II biogenesis. The protein is Protein PsbN of Chlorokybus atmophyticus (Soil alga).